The following is a 395-amino-acid chain: DNA primase small subunit PriS (395 aa).

Residues aspartate 95, aspartate 97, and aspartate 302 contribute to the active site.

This sequence belongs to the eukaryotic-type primase small subunit family. Heterodimer of a small subunit (PriS) and a large subunit (PriL). The cofactor is Mg(2+). Mn(2+) serves as cofactor.

Functionally, catalytic subunit of DNA primase, an RNA polymerase that catalyzes the synthesis of short RNA molecules used as primers for DNA polymerase during DNA replication. The small subunit contains the primase catalytic core and has DNA synthesis activity on its own. Binding to the large subunit stabilizes and modulates the activity, increasing the rate of DNA synthesis while decreasing the length of the DNA fragments, and conferring RNA synthesis capability. The DNA polymerase activity may enable DNA primase to also catalyze primer extension after primer synthesis. May also play a role in DNA repair. This chain is DNA primase small subunit PriS, found in Methanothrix thermoacetophila (strain DSM 6194 / JCM 14653 / NBRC 101360 / PT) (Methanosaeta thermophila).